We begin with the raw amino-acid sequence, 251 residues long: Carboxy-S-adenosyl-L-methionine synthase (251 aa).

S-adenosyl-L-methionine contacts are provided by residues Tyr48, 73-75 (GCS), Asn140, and Arg207.

It belongs to the class I-like SAM-binding methyltransferase superfamily. Cx-SAM synthase family. As to quaternary structure, homodimer.

It catalyses the reaction prephenate + S-adenosyl-L-methionine = carboxy-S-adenosyl-L-methionine + 3-phenylpyruvate + H2O. Catalyzes the conversion of S-adenosyl-L-methionine (SAM) to carboxy-S-adenosyl-L-methionine (Cx-SAM). This Hydrogenovibrio crunogenus (strain DSM 25203 / XCL-2) (Thiomicrospira crunogena) protein is Carboxy-S-adenosyl-L-methionine synthase.